Consider the following 158-residue polypeptide: NADH-quinone oxidoreductase subunit B (158 aa).

[4Fe-4S] cluster contacts are provided by Cys37, Cys38, Cys102, and Cys132.

The protein belongs to the complex I 20 kDa subunit family. As to quaternary structure, NDH-1 is composed of 14 different subunits. Subunits NuoB, C, D, E, F, and G constitute the peripheral sector of the complex. Requires [4Fe-4S] cluster as cofactor.

The protein resides in the cell inner membrane. The catalysed reaction is a quinone + NADH + 5 H(+)(in) = a quinol + NAD(+) + 4 H(+)(out). NDH-1 shuttles electrons from NADH, via FMN and iron-sulfur (Fe-S) centers, to quinones in the respiratory chain. Couples the redox reaction to proton translocation (for every two electrons transferred, four hydrogen ions are translocated across the cytoplasmic membrane), and thus conserves the redox energy in a proton gradient. The sequence is that of NADH-quinone oxidoreductase subunit B from Hydrogenovibrio crunogenus (strain DSM 25203 / XCL-2) (Thiomicrospira crunogena).